Reading from the N-terminus, the 119-residue chain is Ribosome-binding factor A (119 aa).

This sequence belongs to the RbfA family. In terms of assembly, monomer. Binds 30S ribosomal subunits, but not 50S ribosomal subunits or 70S ribosomes.

It localises to the cytoplasm. Functionally, one of several proteins that assist in the late maturation steps of the functional core of the 30S ribosomal subunit. Associates with free 30S ribosomal subunits (but not with 30S subunits that are part of 70S ribosomes or polysomes). Required for efficient processing of 16S rRNA. May interact with the 5'-terminal helix region of 16S rRNA. This Coxiella burnetii (strain CbuG_Q212) (Coxiella burnetii (strain Q212)) protein is Ribosome-binding factor A.